The chain runs to 757 residues: 5-methyltetrahydropteroyltriglutamate--homocysteine methyltransferase (757 aa).

5-methyltetrahydropteroyltri-L-glutamate contacts are provided by Lys-18 and Asn-116. 437–439 is an L-homocysteine binding site; that stretch reads IGS. L-methionine-binding positions include 437 to 439 and Glu-490; that span reads IGS. 5-methyltetrahydropteroyltri-L-glutamate-binding positions include 521 to 522 and Trp-567; that span reads RC. Asp-605 serves as a coordination point for L-homocysteine. Asp-605 lines the L-methionine pocket. The Zn(2+) site is built by His-647, Cys-649, His-658, Asp-662, and Glu-671. The active-site Proton donor is His-701. Cys-733 is a binding site for Zn(2+).

Belongs to the vitamin-B12 independent methionine synthase family. Zn(2+) serves as cofactor. Expressed in pollen (at protein level).

The enzyme catalyses 5-methyltetrahydropteroyltri-L-glutamate + L-homocysteine = tetrahydropteroyltri-L-glutamate + L-methionine. It participates in amino-acid biosynthesis; L-methionine biosynthesis via de novo pathway; L-methionine from L-homocysteine (MetE route): step 1/1. Its function is as follows. Catalyzes the transfer of a methyl group from 5-methyltetrahydrofolate to homocysteine resulting in methionine formation. This is 5-methyltetrahydropteroyltriglutamate--homocysteine methyltransferase from Kali turgidum (Prickly saltwort).